Reading from the N-terminus, the 249-residue chain is MPFEIVFEGAKEFAQLIETASRLIDEAAFKVTEEGISMRAMDPSRVVLIDLNLPSSIFSKYEVDGEETIGVNMDHLKKVLKRGKAKDTLILRKGEENFLEISLQGTATRTFRLPLIDVEEIEVELPDLPYTAKVVVLGEVLKEAVKDASLVSDSIKFMAKENEFIMRAEGETQEVEVKLTLEDEGLLDIEVQEETKSAYGVSYLADMVKGIGKADEVTMRFGNEMPMQMEYYIRDEGRLTFLLAPRVEE.

Belongs to the PCNA family. Homotrimer. The subunits circularize to form a toroid; DNA passes through its center. Replication factor C (RFC) is required to load the toroid on the DNA.

Functionally, sliding clamp subunit that acts as a moving platform for DNA processing. Responsible for tethering the catalytic subunit of DNA polymerase and other proteins to DNA during high-speed replication. This is DNA polymerase sliding clamp from Pyrococcus horikoshii (strain ATCC 700860 / DSM 12428 / JCM 9974 / NBRC 100139 / OT-3).